Consider the following 176-residue polypeptide: MAKTDKVTAVAEITEQFKDSTATVITEYRGLSVSALATLRRSLGASATYAVAKNTLVKRAAADAGVEGLDELFAGPTAIAFIKGEPVDAAKAIKTFAKDNKALIIKGGYMDGRALSVAEVERIADLESREVLLAKLAGAMKGNLNKAAGLFAAPASQVARLAAALQEKKAGEESAA.

It belongs to the universal ribosomal protein uL10 family. As to quaternary structure, part of the ribosomal stalk of the 50S ribosomal subunit. The N-terminus interacts with L11 and the large rRNA to form the base of the stalk. The C-terminus forms an elongated spine to which L12 dimers bind in a sequential fashion forming a multimeric L10(L12)X complex.

Its function is as follows. Forms part of the ribosomal stalk, playing a central role in the interaction of the ribosome with GTP-bound translation factors. This chain is Large ribosomal subunit protein uL10, found in Mycobacteroides abscessus (strain ATCC 19977 / DSM 44196 / CCUG 20993 / CIP 104536 / JCM 13569 / NCTC 13031 / TMC 1543 / L948) (Mycobacterium abscessus).